Reading from the N-terminus, the 1673-residue chain is Calmodulin-binding transcription activator 1 (1673 aa).

The CG-1 DNA-binding region spans 63–188 (KCSSLPKERH…YLNVPAIEDC (126 aa)). The Nuclear localization signal motif lies at 112–119 (RKKVKYRK). The tract at residues 283-375 (HRIISPKVEP…LNSDPDMVDS (93 aa)) is disordered. The span at 302 to 313 (EVQHNDVSEGKH) shows a compositional bias: basic and acidic residues. Residues 337–367 (HQSSTEVSSTNQVEVPDTTQSSPVSISSGLN) show a composition bias toward polar residues. The 79-residue stretch at 875-953 (DYSPEWSYPE…ISNSVVFEYK (79 aa)) folds into the IPT/TIG domain. The disordered stretch occupies residues 990–1021 (MAEMTGSQQHKQASGGGSSGGGSGSGNGGSQA). Residues 1003 to 1018 (SGGGSSGGGSGSGNGG) show a composition bias toward gly residues. 3 ANK repeats span residues 1064–1093 (RGMT…KHAD), 1109–1129 (FSCT…AVVL), and 1143–1172 (LGRL…DEQA). 2 disordered regions span residues 1215-1246 (ASTN…PKKH) and 1264-1317 (ALSL…GSQP). A compositionally biased stretch (polar residues) spans 1273 to 1289 (RKQSPSSKQSVPETLSP). 3 IQ domains span residues 1547–1576 (QEVA…AAIL), 1577–1599 (IQSK…AAVL), and 1600–1622 (IQKY…TAVI).

Belongs to the CAMTA family. May interact with calmodulin. In terms of tissue distribution, normally expressed in non-neoplastic adult central nervous system tissues: detected in whole brain, cerebellum, brain cortex, occipital lobe, frontal lobe, temporal lobe, putamen. Expression levels are low in oligodendroglial tumors, and are reduced by half in oligodendroglioma and astrocytoma cases with 1p loss of heterozygosity. Detected in neuroblastic-type cultured neuroblastoma cells. Expressed in heart and kidney.

Its subcellular location is the nucleus. It is found in the cytoplasm. Its function is as follows. Transcriptional activator. The sequence is that of Calmodulin-binding transcription activator 1 from Homo sapiens (Human).